We begin with the raw amino-acid sequence, 214 residues long: Large ribosomal subunit protein uL16 (214 aa).

The residue at position 32 (Arg32) is a Citrulline. Lys175 participates in a covalent cross-link: Glycyl lysine isopeptide (Lys-Gly) (interchain with G-Cter in SUMO2). Residue Lys188 forms a Glycyl lysine isopeptide (Lys-Gly) (interchain with G-Cter in ubiquitin) linkage.

The protein belongs to the universal ribosomal protein uL16 family. As to quaternary structure, component of the large ribosomal subunit. Mature ribosomes consist of a small (40S) and a large (60S) subunit. The 40S subunit contains about 33 different proteins and 1 molecule of RNA (18S). The 60S subunit contains about 49 different proteins and 3 molecules of RNA (28S, 5.8S and 5S). In terms of processing, citrullinated by PADI4. Post-translationally, ufmylated by UFL1.

The protein resides in the cytoplasm. Functionally, component of the large ribosomal subunit. Plays a role in the formation of actively translating ribosomes. May play a role in the embryonic brain development. The sequence is that of Large ribosomal subunit protein uL16 from Bos taurus (Bovine).